The following is a 364-amino-acid chain: MQVCWFERFGGGNQLLTVLSSSRTCYARFVNFKVFKRMENYRLRRNMPRTGPCKLLLPLSCGISSSVLLHILNAQIQHELAKSHPSPGFDLHLLVIEPSSISHSSLSYDEGFELLQQTFPLHSFTRIPLHSIFELDPELQEVISQFSKDGFVDDTGLSAKERLDAFRASIPTSTSKVDVDYILITRLVVAFAKKIACRGVLWGDTDTRLAAKTLANVAKGRGSSLTWQVCDGMSPFGVEFNFPLRDLFKAEVDNYASFFPELTRIIIPDEPPSENVLTKNLSIDELMMRYVQTQGEKYPGVMANVTRTASKLQASLMPANVPQCSFCGAFMLNSGNNDGGDTTGASRALELCYACIRSRPELTC.

The protein belongs to the CTU2/NCS2 family.

It is found in the cytoplasm. Its pathway is tRNA modification; 5-methoxycarbonylmethyl-2-thiouridine-tRNA biosynthesis. In terms of biological role, plays a central role in 2-thiolation of mcm(5)S(2)U at tRNA wobble positions of tRNA(Lys), tRNA(Glu) and tRNA(Gln). May act by forming a heterodimer with ncs6 that ligates sulfur from thiocarboxylated urm1 onto the uridine of tRNAs at wobble position. Prior mcm(5) tRNA modification by the elongator complex is required for 2-thiolation. May also be involved in protein urmylation. This is Cytoplasmic tRNA 2-thiolation protein 2 (ncs2) from Aspergillus fumigatus (strain CBS 144.89 / FGSC A1163 / CEA10) (Neosartorya fumigata).